A 326-amino-acid chain; its full sequence is MYNLSILETQKAIKFIKDLFQVNLAHALKLHRVTAPLVLERNKGINDDLNGSENPVTFTSDGNGISGEIPQSLAKWKRMMLGKYEIPLHEGIYADMNAIRKDESLSSIHSIYVDQWDWELHIKKTERNLETLKVVVKKIYEIIRLCQKEVNKKYEWFAENLLPEEITFISSEDLLQRYPNKTPKERERLIASKYKAVFIIGIGDNLSDGKPHDLRAPDYDDWKLNGDIIVWNETTKSALELSSMGIRVDEVSLVEQLDKSNNNSRKELDFHKKLINKEFPYSIGGGIGQSRLCYFLLHKQHIGEVQSSLWPKDILEEAEKNNIKLL.

It belongs to the class-II aminoacyl-tRNA synthetase family. AsnA subfamily.

The protein localises to the cytoplasm. The catalysed reaction is L-aspartate + NH4(+) + ATP = L-asparagine + AMP + diphosphate + H(+). It participates in amino-acid biosynthesis; L-asparagine biosynthesis; L-asparagine from L-aspartate (ammonia route): step 1/1. In Malacoplasma penetrans (strain HF-2) (Mycoplasma penetrans), this protein is Aspartate--ammonia ligase.